Here is a 140-residue protein sequence, read N- to C-terminus: Large ribosomal subunit protein uL14 (140 aa).

It belongs to the universal ribosomal protein uL14 family.

This Brugia malayi (Filarial nematode worm) protein is Large ribosomal subunit protein uL14 (RPL23).